Here is a 257-residue protein sequence, read N- to C-terminus: 3-deoxy-manno-octulosonate cytidylyltransferase (257 aa).

Belongs to the KdsB family.

Its subcellular location is the cytoplasm. It catalyses the reaction 3-deoxy-alpha-D-manno-oct-2-ulosonate + CTP = CMP-3-deoxy-beta-D-manno-octulosonate + diphosphate. It participates in nucleotide-sugar biosynthesis; CMP-3-deoxy-D-manno-octulosonate biosynthesis; CMP-3-deoxy-D-manno-octulosonate from 3-deoxy-D-manno-octulosonate and CTP: step 1/1. The protein operates within bacterial outer membrane biogenesis; lipopolysaccharide biosynthesis. Its function is as follows. Activates KDO (a required 8-carbon sugar) for incorporation into bacterial lipopolysaccharide in Gram-negative bacteria. The protein is 3-deoxy-manno-octulosonate cytidylyltransferase of Methylococcus capsulatus (strain ATCC 33009 / NCIMB 11132 / Bath).